A 175-amino-acid polypeptide reads, in one-letter code: MTTIVSVRRKGQVVVGGDGQVSLGNTVMKGNARKVRRLYNGKVLTGFAGGTADAFTLFELFERKLEMHQGHLLKSAVELAKEWRTDRALRRLEAMLIVADKTESLIITGNGDVVQPEEDQILAIGSGGNYALSAARALVENTDLSAREIVEKSLKIAGDICVFTNLTHTIEELSE.

Thr-2 is an active-site residue. Na(+)-binding residues include Gly-158, Cys-161, and Thr-164.

This sequence belongs to the peptidase T1B family. HslV subfamily. As to quaternary structure, a double ring-shaped homohexamer of HslV is capped on each side by a ring-shaped HslU homohexamer. The assembly of the HslU/HslV complex is dependent on binding of ATP.

The protein localises to the cytoplasm. It carries out the reaction ATP-dependent cleavage of peptide bonds with broad specificity.. With respect to regulation, allosterically activated by HslU binding. Its function is as follows. Protease subunit of a proteasome-like degradation complex believed to be a general protein degrading machinery. In Histophilus somni (strain 129Pt) (Haemophilus somnus), this protein is ATP-dependent protease subunit HslV.